The primary structure comprises 150 residues: Large ribosomal subunit protein uL11 (150 aa).

It belongs to the universal ribosomal protein uL11 family. As to quaternary structure, part of the ribosomal stalk of the 50S ribosomal subunit. Interacts with L10 and the large rRNA to form the base of the stalk. L10 forms an elongated spine to which L12 dimers bind in a sequential fashion forming a multimeric L10(L12)X complex. In terms of processing, one or more lysine residues are methylated.

Its function is as follows. Forms part of the ribosomal stalk which helps the ribosome interact with GTP-bound translation factors. In Ureaplasma parvum serovar 3 (strain ATCC 27815 / 27 / NCTC 11736), this protein is Large ribosomal subunit protein uL11.